We begin with the raw amino-acid sequence, 205 residues long: GTP cyclohydrolase-2 (205 aa).

49 to 53 (RLHSE) contributes to the GTP binding site. Zn(2+)-binding residues include cysteine 54, cysteine 65, and cysteine 67. Residues glutamine 70, 92–94 (EGR), and threonine 114 contribute to the GTP site. Residue aspartate 126 is the Proton acceptor of the active site. Arginine 128 acts as the Nucleophile in catalysis. Positions 149 and 154 each coordinate GTP.

The protein belongs to the GTP cyclohydrolase II family. Zn(2+) is required as a cofactor.

The enzyme catalyses GTP + 4 H2O = 2,5-diamino-6-hydroxy-4-(5-phosphoribosylamino)-pyrimidine + formate + 2 phosphate + 3 H(+). It functions in the pathway cofactor biosynthesis; riboflavin biosynthesis; 5-amino-6-(D-ribitylamino)uracil from GTP: step 1/4. In terms of biological role, catalyzes the conversion of GTP to 2,5-diamino-6-ribosylamino-4(3H)-pyrimidinone 5'-phosphate (DARP), formate and pyrophosphate. The chain is GTP cyclohydrolase-2 from Pseudomonas putida (strain W619).